Consider the following 237-residue polypeptide: Small ribosomal subunit protein uS2c (237 aa).

It belongs to the universal ribosomal protein uS2 family.

The protein localises to the plastid. In Epifagus virginiana (Beechdrops), this protein is Small ribosomal subunit protein uS2c (rps2).